The primary structure comprises 769 residues: Probable protease Ga0334635_1659 (769 aa).

A disordered region spans residues 118-167 (VARGSSDNNGAPPLSFTLSHGDPKSDPEPSSPSRLVNTGLSEAERPESPL).

Probably a dedicated protease for substrate gasdermin bGSDM; cleaves the bGSDM precursor, releasing the pore-forming moiety, which integrates into the membrane and triggers cell death. Involved in defense against bacteriophages. Expression of gasdermin bGSDM and this neighboring protease is toxic in E.coli. This Vitiosangium sp. (strain GDMCC 1.1324) protein is Probable protease Ga0334635_1659.